The following is a 188-amino-acid chain: Defensin-like protein 99 (188 aa).

An N-terminal signal peptide occupies residues Met1–Ala28. Intrachain disulfides connect Cys37–Cys95, Cys45–Cys77, Cys58–Cys92, Cys62–Cys94, Cys123–Cys178, Cys137–Cys175, and Cys141–Cys177.

It belongs to the DEFL family.

Its subcellular location is the secreted. This Arabidopsis thaliana (Mouse-ear cress) protein is Defensin-like protein 99.